An 86-amino-acid polypeptide reads, in one-letter code: Large ribosomal subunit protein uL23 (86 aa).

It belongs to the universal ribosomal protein uL23 family. Part of the 50S ribosomal subunit. Contacts protein L29.

In terms of biological role, binds to 23S rRNA. One of the proteins that surrounds the polypeptide exit tunnel on the outside of the ribosome. This chain is Large ribosomal subunit protein uL23, found in Pyrococcus abyssi (strain GE5 / Orsay).